A 90-amino-acid polypeptide reads, in one-letter code: Small ribosomal subunit protein bS16 (90 aa).

It belongs to the bacterial ribosomal protein bS16 family.

The sequence is that of Small ribosomal subunit protein bS16 from Geobacillus thermodenitrificans (strain NG80-2).